The primary structure comprises 386 residues: Agamous-like MADS-box protein AGL103 (386 aa).

One can recognise an MADS-box domain in the interval 29 to 76 (SSSRATSLIKRQQTVFKKAKELSILCDIDVCVICYGSNGELKTWPEER).

As to quaternary structure, interacts with MEE14/CBP1.

It localises to the nucleus. Its function is as follows. Probable transcription factor that may function in the maintenance of the proper function of the central cell in pollen tube attraction. This Arabidopsis thaliana (Mouse-ear cress) protein is Agamous-like MADS-box protein AGL103.